An 80-amino-acid chain; its full sequence is Exodeoxyribonuclease 7 small subunit (80 aa).

Belongs to the XseB family. As to quaternary structure, heterooligomer composed of large and small subunits.

The protein localises to the cytoplasm. The enzyme catalyses Exonucleolytic cleavage in either 5'- to 3'- or 3'- to 5'-direction to yield nucleoside 5'-phosphates.. In terms of biological role, bidirectionally degrades single-stranded DNA into large acid-insoluble oligonucleotides, which are then degraded further into small acid-soluble oligonucleotides. This Salmonella paratyphi B (strain ATCC BAA-1250 / SPB7) protein is Exodeoxyribonuclease 7 small subunit.